Reading from the N-terminus, the 461-residue chain is GTPase Der (461 aa).

2 consecutive EngA-type G domains span residues 25–188 (PVVA…PNVA) and 198–371 (RRVA…ASWD). Residues 31-38 (GRPNVGKS), 78-82 (DTGGW), 140-143 (NKVD), 204-211 (GKPNVGKS), 251-255 (DTAGL), and 316-319 (NKWD) each bind GTP. One can recognise a KH-like domain in the interval 372–454 (TRIATGPLNI…PIRINVRVRE (83 aa)).

This sequence belongs to the TRAFAC class TrmE-Era-EngA-EngB-Septin-like GTPase superfamily. EngA (Der) GTPase family. Associates with the 50S ribosomal subunit.

GTPase that plays an essential role in the late steps of ribosome biogenesis. The polypeptide is GTPase Der (Mycobacterium leprae (strain TN)).